Consider the following 80-residue polypeptide: Acyl carrier protein (80 aa).

One can recognise a Carrier domain in the interval 4 to 79 (EAILEKVRSI…DAVKYIEEKQ (76 aa)). Ser-39 is modified (O-(pantetheine 4'-phosphoryl)serine).

The protein belongs to the acyl carrier protein (ACP) family. 4'-phosphopantetheine is transferred from CoA to a specific serine of apo-ACP by AcpS. This modification is essential for activity because fatty acids are bound in thioester linkage to the sulfhydryl of the prosthetic group.

It is found in the cytoplasm. The protein operates within lipid metabolism; fatty acid biosynthesis. In terms of biological role, carrier of the growing fatty acid chain in fatty acid biosynthesis. The protein is Acyl carrier protein of Prochlorococcus marinus (strain NATL1A).